The primary structure comprises 95 residues: MANHPSAKKMIKVIKKRTMINRMRKSRAHNYIKKFMAALAAGNKELMLENFKKAESNLHRCVNKKIIHRNTAARKISRLALKLKTFDLQQQEKAS.

It belongs to the bacterial ribosomal protein bS20 family.

Functionally, binds directly to 16S ribosomal RNA. The polypeptide is Small ribosomal subunit protein bS20 (Ehrlichia ruminantium (strain Gardel)).